Consider the following 148-residue polypeptide: MKALQASTSYSFFSKSSSATLQRRTHRPQCVILSKVEPSDKSVEIMRKFSEQYARKSGTYFCVDKGVTSVVIKGLAEHKDSLGAPLCPCRYYDDKAAEATQGFWNCPCVPMRERKECHCMLFLTPENDFAGKDQTIGLDEIREVTANM.

Residues 1–35 constitute a chloroplast transit peptide; that stretch reads MKALQASTSYSFFSKSSSATLQRRTHRPQCVILSK. C87 provides a ligand contact to [4Fe-4S] cluster. C89 acts as the Nucleophile in catalysis. C89 and C119 are disulfide-bonded. The [4Fe-4S] cluster site is built by C106, C108, and C117.

It belongs to the ferredoxin thioredoxin reductase beta subunit family. In terms of assembly, heterodimer of subunit A (variable subunit) and subunit B (catalytic subunit). Heterodimeric FTR forms a complex with ferredoxin and thioredoxin. [4Fe-4S] cluster is required as a cofactor.

The protein resides in the plastid. It is found in the chloroplast. The enzyme catalyses [thioredoxin]-disulfide + 2 reduced [2Fe-2S]-[ferredoxin] + 2 H(+) = [thioredoxin]-dithiol + 2 oxidized [2Fe-2S]-[ferredoxin]. Catalytic subunit of the ferredoxin-thioredoxin reductase (FTR), which catalyzes the two-electron reduction of thioredoxins by the electrons provided by reduced ferredoxin. The sequence is that of Ferredoxin-thioredoxin reductase catalytic chain, chloroplastic from Spinacia oleracea (Spinach).